Reading from the N-terminus, the 26-residue chain is Bifunctional protein PutA (26 aa).

The tract at residues 1 to 26 (MGTTTMGVKLDDATRERIKSAASRID) is disordered. Residues 9 to 26 (KLDDATRERIKSAASRID) are compositionally biased toward basic and acidic residues.

FAD is required as a cofactor.

The catalysed reaction is L-proline + a quinone = (S)-1-pyrroline-5-carboxylate + a quinol + H(+). The enzyme catalyses L-glutamate 5-semialdehyde + NAD(+) + H2O = L-glutamate + NADH + 2 H(+). The protein operates within amino-acid degradation; L-proline degradation into L-glutamate; L-glutamate from L-proline: step 1/2. It participates in amino-acid degradation; L-proline degradation into L-glutamate; L-glutamate from L-proline: step 2/2. Its function is as follows. Oxidizes proline to glutamate for use as a carbon and nitrogen source and also function as a transcriptional repressor of the put operon. This Klebsiella pneumoniae protein is Bifunctional protein PutA (putA).